We begin with the raw amino-acid sequence, 187 residues long: UPF0301 protein PC1_3712 (187 aa).

Belongs to the UPF0301 (AlgH) family.

The sequence is that of UPF0301 protein PC1_3712 from Pectobacterium carotovorum subsp. carotovorum (strain PC1).